Reading from the N-terminus, the 144-residue chain is Large ribosomal subunit protein uL11 (144 aa).

The protein belongs to the universal ribosomal protein uL11 family. As to quaternary structure, part of the ribosomal stalk of the 50S ribosomal subunit. Interacts with L10 and the large rRNA to form the base of the stalk. L10 forms an elongated spine to which L12 dimers bind in a sequential fashion forming a multimeric L10(L12)X complex. One or more lysine residues are methylated.

Forms part of the ribosomal stalk which helps the ribosome interact with GTP-bound translation factors. The polypeptide is Large ribosomal subunit protein uL11 (Rickettsia bellii (strain OSU 85-389)).